The chain runs to 28 residues: WFRSFKSYYGHHGSVYRPNEPNFRSFAS.

In terms of tissue distribution, expressed by the venom duct.

The protein resides in the secreted. Functionally, potent inhibitor of human alpha-3-beta-2 nAChRs (IC(50)=566.2 nM). Irreversibly inhibits the acetylcholine-induced response on human alpha-7/CHRNA7 (55% inhibition at 5.6 uM) and alpha-3-beta-2/CHRNA3-CHRNB2 (91% inhibition) nAChRs. This is Turritoxin F21-2 from Polystira nobilis (Sea snail).